A 230-amino-acid polypeptide reads, in one-letter code: Large ribosomal subunit protein uL1c (230 aa).

It belongs to the universal ribosomal protein uL1 family. In terms of assembly, part of the 50S ribosomal subunit.

The protein resides in the plastid. The protein localises to the chloroplast. Functionally, binds directly to 23S rRNA. Might be involved in E site tRNA release (Potential). In Trieres chinensis (Marine centric diatom), this protein is Large ribosomal subunit protein uL1c (rpl1).